The primary structure comprises 236 residues: tRNA1(Val) (adenine(37)-N6)-methyltransferase (236 aa).

Belongs to the methyltransferase superfamily. tRNA (adenine-N(6)-)-methyltransferase family.

The protein resides in the cytoplasm. It catalyses the reaction adenosine(37) in tRNA1(Val) + S-adenosyl-L-methionine = N(6)-methyladenosine(37) in tRNA1(Val) + S-adenosyl-L-homocysteine + H(+). Its function is as follows. Specifically methylates the adenine in position 37 of tRNA(1)(Val) (anticodon cmo5UAC). The polypeptide is tRNA1(Val) (adenine(37)-N6)-methyltransferase (Shewanella sp. (strain MR-4)).